Consider the following 111-residue polypeptide: Large ribosomal subunit protein uL24 (111 aa).

The segment at 85 to 111 (NTNDPRRKDIINRKASRQKEEQGGKAQ) is disordered. Residues 88-111 (DPRRKDIINRKASRQKEEQGGKAQ) show a composition bias toward basic and acidic residues.

The protein belongs to the universal ribosomal protein uL24 family. As to quaternary structure, part of the 50S ribosomal subunit.

In terms of biological role, one of two assembly initiator proteins, it binds directly to the 5'-end of the 23S rRNA, where it nucleates assembly of the 50S subunit. Functionally, located at the polypeptide exit tunnel on the outside of the subunit. This chain is Large ribosomal subunit protein uL24, found in Metallosphaera sedula (strain ATCC 51363 / DSM 5348 / JCM 9185 / NBRC 15509 / TH2).